Reading from the N-terminus, the 149-residue chain is UPF0102 protein Bpro_0391 (149 aa).

Residues 1–30 form a disordered region; that stretch reads MWFSRKQVVKPPPDGSRAQPGQVTTKSRGD.

It belongs to the UPF0102 family.

The protein is UPF0102 protein Bpro_0391 of Polaromonas sp. (strain JS666 / ATCC BAA-500).